A 613-amino-acid polypeptide reads, in one-letter code: Apoptosis-inducing factor 1, mitochondrial (613 aa).

2 consecutive short sequence motifs (mitochondrial localization signal) follow at residues 1–31 (MFRC…PRQR) and 63–89 (KIDN…KTMK). A mitochondrion-targeting transit peptide spans 1-54 (MFRCGGLAAGALKQKLVPLVRTVCVRSPRQRNRLPGNLFQRWHVPLELQMTRQM). Residues 55–101 (ASSGASGGKIDNSVLVLIVGLSTVGAGAYAYKTMKEDEKRYNERISG) constitute a propeptide, removed in mature form. The interval 100–127 (SGLGLTPEQKQKKAALSASEGEEVPQDK) is disordered. Thr-105 bears the Phosphothreonine mark. Lys-109 is modified (N6-succinyllysine). Phosphoserine is present on residues Ser-116 and Ser-118. The segment at 134–483 (FLLIGGGTAA…KPYWHQSMFW (350 aa)) is FAD-dependent oxidoreductase. Residues 138–142 (GGGTA), 164–165 (ED), Arg-172, and Lys-177 contribute to the FAD site. Trp-196 contributes to the NAD(+) binding site. Val-233 serves as a coordination point for FAD. A Glycyl lysine isopeptide (Lys-Gly) (interchain with G-Cter in ubiquitin) cross-link involves residue Lys-255. The residue at position 268 (Ser-268) is a Phosphoserine. Position 285 (Arg-285) interacts with FAD. Residue Ser-292 is modified to Phosphoserine. NAD(+) is bound by residues 308–311 (GGFL), Glu-336, and Lys-342. Ser-371 is modified (phosphoserine). Lys-388 is subject to N6-acetyllysine. Gly-399 serves as a coordination point for NAD(+). Asp-438 serves as a coordination point for FAD. The Nuclear localization signal signature appears at 446–451 (KLGRRR). NAD(+) contacts are provided by residues 453-454 (EH), Trp-483, and Glu-493. FAD-binding positions include 454 to 455 (HH) and Trp-483. A compositionally biased stretch (polar residues) spans 513 to 529 (AQDNPKSATEQSGTGIR). Positions 513–554 (AQDNPKSATEQSGTGIRSESETESEASEITIPPSTPAVPQAP) are disordered. Thr-521 bears the Phosphothreonine mark. Phosphoserine occurs at positions 524 and 530. Asn-583 provides a ligand contact to NAD(+). Position 593 is an N6-acetyllysine (Lys-593).

Belongs to the FAD-dependent oxidoreductase family. Monomer (oxidized form). Homodimer (reduced form). Upon reduction with NADH, undergoes dimerization and forms tight, long-lived FADH2-NAD charge transfer complexes (CTC) resistant to oxidation. Also dimerizes with isoform 3 preventing its release from mitochondria. Interacts with XIAP/BIRC4. Interacts (via N-terminus) with EIF3G (via C-terminus). Interacts with PRELID1. Interacts with CHCHD4; the interaction increases in presence of NADH. Interacts with processed form of PARP1 (Poly [ADP-ribose] polymerase 1, processed C-terminus); interaction is mediated with poly-ADP-ribose chains attached to PARP1, promoting translocation into the nucleus. It depends on FAD as a cofactor. Post-translationally, under normal conditions, a 54-residue N-terminal segment is first proteolytically removed during or just after translocation into the mitochondrial intermembrane space (IMS) by the mitochondrial processing peptidase (MPP) to form the inner-membrane-anchored mature form (AIFmit). During apoptosis, it is further proteolytically processed at amino-acid position 101 leading to the generation of the mature form, which is confined to the mitochondrial IMS in a soluble form (AIFsol). AIFsol is released to the cytoplasm in response to specific death signals, and translocated to the nucleus, where it induces nuclear apoptosis in a caspase-independent manner. Ubiquitination by XIAP/BIRC4 does not lead to proteasomal degradation. Ubiquitination at Lys-255 by XIAP/BIRC4 blocks its ability to bind DNA and induce chromatin degradation, thereby inhibiting its ability to induce cell death. Expressed in all tested tissues. Detected in muscle and skin fibroblasts (at protein level). Expressed in osteoblasts (at protein level). As to expression, brain specific. In terms of tissue distribution, expressed in all tested tissues except brain. Isoform 5 is frequently down-regulated in human cancers.

The protein resides in the mitochondrion intermembrane space. The protein localises to the mitochondrion inner membrane. It localises to the cytoplasm. Its subcellular location is the nucleus. It is found in the perinuclear region. The protein resides in the mitochondrion. The protein localises to the cytosol. The catalysed reaction is A + NADH + H(+) = AH2 + NAD(+). Functionally, functions both as NADH oxidoreductase and as regulator of apoptosis. In response to apoptotic stimuli, it is released from the mitochondrion intermembrane space into the cytosol and to the nucleus, where it functions as a proapoptotic factor in a caspase-independent pathway. Release into the cytoplasm is mediated upon binding to poly-ADP-ribose chains. The soluble form (AIFsol) found in the nucleus induces 'parthanatos' i.e. caspase-independent fragmentation of chromosomal DNA. Binds to DNA in a sequence-independent manner. Interacts with EIF3G, and thereby inhibits the EIF3 machinery and protein synthesis, and activates caspase-7 to amplify apoptosis. Plays a critical role in caspase-independent, pyknotic cell death in hydrogen peroxide-exposed cells. In contrast, participates in normal mitochondrial metabolism. Plays an important role in the regulation of respiratory chain biogenesis by interacting with CHCHD4 and controlling CHCHD4 mitochondrial import. Its function is as follows. Has NADH oxidoreductase activity. Does not induce nuclear apoptosis. Pro-apoptotic isoform. This chain is Apoptosis-inducing factor 1, mitochondrial, found in Homo sapiens (Human).